Consider the following 153-residue polypeptide: UPF0756 membrane protein LCA_1031 (153 aa).

The next 4 helical transmembrane spans lie at 4–24 (WLFL…SLII), 52–72 (WGVT…QIGF), 85–105 (FIAV…VGLL), and 115–135 (LVFG…GPVI).

It belongs to the UPF0756 family.

The protein localises to the cell membrane. This Latilactobacillus sakei subsp. sakei (strain 23K) (Lactobacillus sakei subsp. sakei) protein is UPF0756 membrane protein LCA_1031.